Consider the following 199-residue polypeptide: Pneumococcal vaccine antigen A homolog (199 aa).

It is found in the cell surface. The sequence is that of Pneumococcal vaccine antigen A homolog (pvaA) from Streptococcus pyogenes serotype M1.